A 347-amino-acid chain; its full sequence is Outer membrane protein A (347 aa).

A signal peptide spans 1–21 (MKKQALTIIFLLVSLVTGIQA). A run of 8 beta stranded transmembrane segments spans residues 26-36 (HWYLGTKMGWS), 63-74 (APVFGLFLGYEF), 78-86 (FSFEIENDT), 105-116 (NSLQLATKLSYP), 121-129 (FHIYTQLGG), 154-163 (PNVSLGAEYI), 168-175 (FITRLDYT), and 194-202 (DVALSFGWK). The interval 207–218 (NINEIFSSYIPQ) is hinge-like. One can recognise an OmpA-like domain in the interval 220 to 347 (SDKQYVALNE…RRVEIEVLSD (128 aa)). A disulfide bridge connects residues Cys-321 and Cys-333.

Belongs to the outer membrane OOP (TC 1.B.6) superfamily. OmpA family. As to quaternary structure, monomer and homodimer.

It is found in the cell outer membrane. Its function is as follows. With TolR probably plays a role in maintaining the position of the peptidoglycan cell wall in the periplasm. Acts as a porin with low permeability that allows slow penetration of small solutes; an internal gate slows down solute passage. The polypeptide is Outer membrane protein A (Buchnera aphidicola subsp. Schizaphis graminum (strain Sg)).